A 918-amino-acid chain; its full sequence is MKVARFQKIPNVENETMIPVLTSKRASELAVSEVAGLLQADLQNGLNKSEVSHRRAFHGWNEFDISEDEPLWKKYISQFKNPLIMLLLASAVISILMRQFDDAVSITVAIVIVVTVAFVQEYRSEKSLEELSKLVPPECHCVREGKLEHTLARDLVPGDTVCLSVGDRVPADLRLFEAVDLSVDESSLTGETAPCSKVTAPQPAANGDLASRSNIAFMGTLVRCGKAKGIVIGTGENSEFGEVFKMMQAEEAPKTPLQKSMDLLGKQLSFYSFGIIGIIMLVGWLLGKDILEMFTISVSLAVAAIPEGLPIVVTVTLALGVMRMVKKRAIVKKLPIVETLGCCNVICSDKTGTLTKNEMTVTHILTSDGLHAEVTGVGYNQFGEVIVDGDVVHGFYNPAVSRIVEAGCVCNDAVIRNNTLMGKPTEGALIALAMKMGLDGLQQDYIRKAEYPFSSEQKWMAVKCVHRTQQDRPEICFMKGAYEQVIKYCTTYNSKGQTLALTQQQRDLYQQEKARMGSAGLRVLALASGPELGQLTFLGLVGIIDPPRTGVKEAVTTLIASGVSIKMITGDSQETAIAIASRLGLYSKTSQSVSGEEVDTMEVQHLSQIVPKVAVFYRASPRHKMKIIKSLQKNGAVVAMTGDGVNDAVALKAADIGVAMGQTGTDVCKEAADMILVDDDFQTIMSAIEEGKGIYNNIKNFVRFQLSTSIAALTLISLATLMNFPNPLNAMQILWINIIMDGPPAQSLGVEPVDKDVIRKPPRNWKDSILTKNLILKILVSSIIIVCGTLFVFWRELRDNVITPRDTTMTFTCFVFFDMFNALSSRSQTKSVFEIGLCSNKMFCYAVLGSIMGQLLVIYFPPLQKVFQTESLSILDLLFLLGLTSSVCIVSEIIKKVERSREKVQKNAGSASSSFLEV.

Residues 1 to 78 (MKVARFQKIP…EPLWKKYISQ (78 aa)) lie on the Cytoplasmic side of the membrane. A helical transmembrane segment spans residues 79–95 (FKNPLIMLLLASAVISI). Topologically, residues 96–99 (LMRQ) are extracellular. A helical transmembrane segment spans residues 100-121 (FDDAVSITVAIVIVVTVAFVQE). Over 122–262 (YRSEKSLEEL…PKTPLQKSMD (141 aa)) the chain is Cytoplasmic. The chain crosses the membrane as a helical span at residues 263–282 (LLGKQLSFYSFGIIGIIMLV). Residues 283 to 294 (GWLLGKDILEMF) are Extracellular-facing. A helical membrane pass occupies residues 295-316 (TISVSLAVAAIPEGLPIVVTVT). Over 317 to 699 (LALGVMRMVK…EGKGIYNNIK (383 aa)) the chain is Cytoplasmic. Residue D349 is the 4-aspartylphosphate intermediate of the active site. 2 residues coordinate Mg(2+): D643 and D647. The helical transmembrane segment at 700 to 722 (NFVRFQLSTSIAALTLISLATLM) threads the bilayer. The Extracellular segment spans residues 723–727 (NFPNP). The helical transmembrane segment at 728-751 (LNAMQILWINIIMDGPPAQSLGVE) threads the bilayer. At 752–775 (PVDKDVIRKPPRNWKDSILTKNLI) the chain is on the cytoplasmic side. Residues 776–794 (LKILVSSIIIVCGTLFVFW) traverse the membrane as a helical segment. Residues 795–801 (RELRDNV) lie on the Extracellular side of the membrane. The helical transmembrane segment at 802-827 (ITPRDTTMTFTCFVFFDMFNALSSRS) threads the bilayer. Over 828–842 (QTKSVFEIGLCSNKM) the chain is Cytoplasmic. Residues 843–862 (FCYAVLGSIMGQLLVIYFPP) form a helical membrane-spanning segment. Residues 863 to 875 (LQKVFQTESLSIL) are Extracellular-facing. Residues 876 to 892 (DLLFLLGLTSSVCIVSE) form a helical membrane-spanning segment. Residues 893-918 (IIKKVERSREKVQKNAGSASSSFLEV) are Cytoplasmic-facing.

Belongs to the cation transport ATPase (P-type) (TC 3.A.3) family. Type IIA subfamily. Monomer. Homodimer. Expressed in hippocampal neurons in the CA3 region of the Amon's horn (at protein level). Expressed in brain, heart, lung, stomach, liver, colon and mammary gland.

It is found in the golgi apparatus. The protein resides in the trans-Golgi network membrane. The protein localises to the golgi stack membrane. It carries out the reaction Ca(2+)(in) + ATP + H2O = Ca(2+)(out) + ADP + phosphate + H(+). The catalysed reaction is Mn(2+)(in) + ATP + H2O = Mn(2+)(out) + ADP + phosphate + H(+). ATP-driven pump that supplies the Golgi apparatus with Ca(2+) and Mn(2+) ions, both essential cofactors for processing and trafficking of newly synthesized proteins in the secretory pathway. Within a catalytic cycle, acquires Ca(2+) or Mn(2+) ions on the cytoplasmic side of the membrane and delivers them to the lumenal side. The transfer of ions across the membrane is coupled to ATP hydrolysis and is associated with a transient phosphorylation that shifts the pump conformation from inward-facing to outward-facing state. Plays a primary role in the maintenance of Ca(2+) homeostasis in the trans-Golgi compartment with a functional impact on Golgi and post-Golgi protein sorting as well as a structural impact on cisternae morphology. Responsible for loading the Golgi stores with Ca(2+) ions in keratinocytes, contributing to keratinocyte differentiation and epidermis integrity. Participates in Ca(2+) and Mn(2+) ions uptake into the Golgi store of hippocampal neurons and regulates protein trafficking required for neural polarity. May also play a role in the maintenance of Ca(2+) and Mn(2+) homeostasis and signaling in the cytosol while preventing cytotoxicity. The protein is Calcium-transporting ATPase type 2C member 1 of Mus musculus (Mouse).